We begin with the raw amino-acid sequence, 443 residues long: ATP-dependent protease ATPase subunit HslU (443 aa).

Residues isoleucine 18, 60-65 (GVGKTE), aspartate 256, glutamate 321, and arginine 393 each bind ATP.

It belongs to the ClpX chaperone family. HslU subfamily. As to quaternary structure, a double ring-shaped homohexamer of HslV is capped on each side by a ring-shaped HslU homohexamer. The assembly of the HslU/HslV complex is dependent on binding of ATP.

Its subcellular location is the cytoplasm. Functionally, ATPase subunit of a proteasome-like degradation complex; this subunit has chaperone activity. The binding of ATP and its subsequent hydrolysis by HslU are essential for unfolding of protein substrates subsequently hydrolyzed by HslV. HslU recognizes the N-terminal part of its protein substrates and unfolds these before they are guided to HslV for hydrolysis. This Escherichia coli O157:H7 (strain EC4115 / EHEC) protein is ATP-dependent protease ATPase subunit HslU.